A 1165-amino-acid polypeptide reads, in one-letter code: Integrin alpha-L (1165 aa).

A signal peptide spans 1–23 (MNSCIIVLRLLLSGPFVFAPAWS). Topologically, residues 24–1084 (YNLDVRHVQN…MKVDLVYEKE (1061 aa)) are extracellular. FG-GAP repeat units follow at residues 29–80 (RHVQ…DCLP) and 81–138 (VTLS…GPVL). Asn-33 carries N-linked (GlcNAc...) asparagine glycosylation. Cys-71 and Cys-78 are disulfide-bonded. N-linked (GlcNAc...) asparagine glycosylation is present at Asn-86. Cys-108 and Cys-126 are disulfide-bonded. The VWFA domain maps to 153-324 (DLVFLFDGSM…EKLKDLFTEL (172 aa)). An N-linked (GlcNAc...) asparagine glycan is attached at Asn-185. FG-GAP repeat units follow at residues 335-386 (SKQD…SSTF), 387-442 (VGNE…GGPW), 443-503 (SQIQ…EFQM), 504-560 (VSEL…GLSP), and 564-624 (QRIE…FSPA). The Ca(2+) site is built by Asp-465, Asp-467, Asp-469, Glu-473, Asp-527, Asn-529, Asp-531, Asp-535, Asp-587, Asp-591, and Asp-595. Residues Asn-646, Asn-667, and Asn-723 are each glycosylated (N-linked (GlcNAc...) asparagine). A disulfide bond links Cys-650 and Cys-704. Disulfide bonds link Cys-768–Cys-774 and Cys-842–Cys-858. Residues Asn-859, Asn-894, and Asn-929 are each glycosylated (N-linked (GlcNAc...) asparagine). 2 disulfide bridges follow: Cys-994-Cys-1009 and Cys-1017-Cys-1048. 2 N-linked (GlcNAc...) asparagine glycosylation sites follow: Asn-1056 and Asn-1067. Residues 1085 to 1105 (MLYLYVLSGIGGLLLLFLIFI) form a helical membrane-spanning segment. Topologically, residues 1106 to 1165 (ALYKVGFFKRNLKEKMEANVDASSEIPGEDAGQPELEKECKDPGCLEPLQKTDEDGSGGD) are cytoplasmic. A GFFKR motif motif is present at residues 1111 to 1115 (GFFKR). The disordered stretch occupies residues 1123 to 1165 (ANVDASSEIPGEDAGQPELEKECKDPGCLEPLQKTDEDGSGGD). The segment covering 1140–1159 (ELEKECKDPGCLEPLQKTDE) has biased composition (basic and acidic residues).

It belongs to the integrin alpha chain family. Heterodimer of an alpha and a beta subunit. The ITGAL alpha subunit associates with the ITGB2 beta subunit. Interacts with THBD. Interacts with CD226. Post-translationally, in resting T-cells, up to 40% of surface ITGAL is constitutively phosphorylated. Phosphorylation causes conformational changes needed for ligand binding and is necessary for the activation by some physiological agents.

It localises to the cell membrane. Its function is as follows. Integrin ITGAL/ITGB2 is a receptor for ICAM1, ICAM2, ICAM3 and ICAM4. Integrin ITGAL/ITGB2 is a receptor for F11R. Integrin ITGAL/ITGB2 is a receptor for the secreted form of ubiquitin-like protein ISG15; the interaction is mediated by ITGAL. Involved in a variety of immune phenomena including leukocyte-endothelial cell interaction, cytotoxic T-cell mediated killing, and antibody dependent killing by granulocytes and monocytes. Contributes to natural killer cell cytotoxicity. Involved in leukocyte adhesion and transmigration of leukocytes including T-cells and neutrophils. Acts as a platform at the immunological synapse to translate TCR engagement and density of the ITGAL ligand ICAM1 into graded adhesion. Required for generation of common lymphoid progenitor cells in bone marrow, indicating the role in lymphopoiesis. Integrin ITGAL/ITGB2 in association with ICAM3, contributes to apoptotic neutrophil phagocytosis by macrophages. The polypeptide is Integrin alpha-L (Bos taurus (Bovine)).